The chain runs to 86 residues: YDAAAGKATYDASCAMCHKTGMMGAPKVGDKAAWAPHIAKGMNVMVANSIKGYKGTKGMMPAKGGNPKLTDAQVGNAVAYMVGQSK.

Residues Cys14, Cys17, His18, and Met60 each coordinate heme c.

Binds 1 heme c group covalently per subunit.

Functionally, this basic c-type monoheme cytochrome has been found exclusively in the green photosynthetic bacteria, although its role in bacterial photosynthesis is not established. It has an unusually low redox potential compared with mitochondrial cytochrome c. It is reactive with cytochrome c oxidases but not with reductases. This is Cytochrome c-555 from Chlorobaculum thiosulfatiphilum (Chlorobium limicola f.sp. thiosulfatophilum).